The sequence spans 33 residues: Brevinin 2AV (33 aa).

An intrachain disulfide couples cysteine 27 to cysteine 33.

As to expression, expressed by the skin glands.

It localises to the secreted. Its function is as follows. Has antibacterial activity. The sequence is that of Brevinin 2AV from Rana arvalis (Moor frog).